The primary structure comprises 394 residues: Elongation factor Tu (394 aa).

One can recognise a tr-type G domain in the interval 10–204; it reads KPHVNIGTIG…AVDSYIPQPV (195 aa). The tract at residues 19–26 is G1; sequence GHVDHGKT. Residue 19–26 participates in GTP binding; it reads GHVDHGKT. Thr26 is a binding site for Mg(2+). The G2 stretch occupies residues 60-64; that stretch reads GITIS. Residues 81–84 are G3; the sequence is DCPG. Residues 81–85 and 136–139 each bind GTP; these read DCPGH and NKVD. Positions 136–139 are G4; it reads NKVD. The segment at 174 to 176 is G5; that stretch reads SAL.

This sequence belongs to the TRAFAC class translation factor GTPase superfamily. Classic translation factor GTPase family. EF-Tu/EF-1A subfamily. Monomer.

Its subcellular location is the cytoplasm. It carries out the reaction GTP + H2O = GDP + phosphate + H(+). GTP hydrolase that promotes the GTP-dependent binding of aminoacyl-tRNA to the A-site of ribosomes during protein biosynthesis. The protein is Elongation factor Tu of Rickettsia canadensis (strain McKiel).